Consider the following 217-residue polypeptide: Protein GrpE (217 aa).

Composition is skewed to acidic residues over residues 1–28, 136–152, and 204–217; these read MSDD…EGDD, DILD…DPGT, and SEAE…DGDE. Disordered regions lie at residues 1 to 44, 135 to 157, and 193 to 217; these read MSDD…NDPA, DDIL…TDPK, and QVTV…DGDE.

This sequence belongs to the GrpE family. As to quaternary structure, homodimer.

Its subcellular location is the cytoplasm. Participates actively in the response to hyperosmotic and heat shock by preventing the aggregation of stress-denatured proteins, in association with DnaK and GrpE. It is the nucleotide exchange factor for DnaK and may function as a thermosensor. Unfolded proteins bind initially to DnaJ; upon interaction with the DnaJ-bound protein, DnaK hydrolyzes its bound ATP, resulting in the formation of a stable complex. GrpE releases ADP from DnaK; ATP binding to DnaK triggers the release of the substrate protein, thus completing the reaction cycle. Several rounds of ATP-dependent interactions between DnaJ, DnaK and GrpE are required for fully efficient folding. This Natronomonas pharaonis (strain ATCC 35678 / DSM 2160 / CIP 103997 / JCM 8858 / NBRC 14720 / NCIMB 2260 / Gabara) (Halobacterium pharaonis) protein is Protein GrpE.